The chain runs to 1463 residues: Gag-Pol polyprotein (1463 aa).

Glycine 2 is lipidated: N-myristoyl glycine; by host. An interaction with Gp41 region spans residues 7 to 31 (VLRGKKADELEKIRLRPGGKKKYRL). Residues 16–22 (LEKIRLR) carry the Nuclear export signal motif. The Nuclear localization signal motif lies at 26–32 (KKKYRLK). The segment at 112 to 138 (TKTTEKMPSTSRPTAPPSGNGGNFPVQ) is disordered. The interaction with human PPIA/CYPA and NUP153 stretch occupies residues 191–228 (NCVGDHQAAMQIIREIINEEAADWDAQHPIPGPLPAGQ). Positions 279-365 (YNPTNILDIK…GGPGQKARLM (87 aa)) are dimerization/Multimerization of capsid protein p24. 2 CCHC-type zinc fingers span residues 389 to 406 (IKCW…QCRA) and 410 to 427 (QGCW…KCPE). A disordered region spans residues 441-508 (EAPQFPCGPN…TRDTMQRDDR (68 aa)). Residues 462 to 508 (RPSRGPTREVHAAREKAERAEREAIQRSDRGLPAARETRDTMQRDDR) are compositionally biased toward basic and acidic residues. The dimerization of protease stretch occupies residues 513 to 517 (PQFSL). The Peptidase A2 domain maps to 532–601 (VEVLLDTGAD…TPINIFGRNI (70 aa)). The For protease activity; shared with dimeric partner role is filled by aspartate 537. 2 dimerization of protease regions span residues 561-567 (GIGGFIN) and 600-612 (NILT…LNLP). Positions 655–845 (EGQLEEAPPT…PPYQWMGYEL (191 aa)) constitute a Reverse transcriptase domain. Residues aspartate 721, aspartate 796, and aspartate 797 each coordinate Mg(2+). Residues 838–846 (YQWMGYELW) form an RT 'primer grip' region. A Tryptophan repeat motif motif is present at residues 1008–1024 (WEQWWDNYWQVTWIPDW). An RNase H type-1 domain is found at 1044–1167 (ILGAETFYTD…VDHLVSQGIR (124 aa)). Residues aspartate 1053, glutamate 1088, aspartate 1108, and aspartate 1159 each coordinate Mg(2+). The Integrase-type zinc-finger motif lies at 1173 to 1214 (EKIEPAQEEHEKYHSNVKELSHKFGLPKLVARQIVNTCTQCQ). Zn(2+)-binding residues include histidine 1182, histidine 1186, cysteine 1210, and cysteine 1213. Positions 1223 to 1374 (QVNAELGTWQ…TPAERLINMV (152 aa)) constitute an Integrase catalytic domain. Mg(2+) contacts are provided by aspartate 1234, aspartate 1286, and glutamate 1322. The segment at residues 1393–1440 (FRVYFREGRDQLWKGPGELLWKGDGAVIVKVGADIKIIPRRKAKIIKD) is a DNA-binding region (integrase-type).

In terms of assembly, homotrimer; further assembles as hexamers of trimers. Interacts with gp41 (via C-terminus). Interacts with host CALM1; this interaction induces a conformational change in the Matrix protein, triggering exposure of the myristate group. Interacts with host AP3D1; this interaction allows the polyprotein trafficking to multivesicular bodies during virus assembly. Part of the pre-integration complex (PIC) which is composed of viral genome, matrix protein, Vpr and integrase. Homodimer; the homodimer further multimerizes as homohexamers or homopentamers. Interacts with human PPIA/CYPA. Interacts with human NUP153. Interacts with host PDZD8; this interaction stabilizes the capsid. Interacts with monkey TRIM5; this interaction destabilizes the capsid. As to quaternary structure, homodimer, whose active site consists of two apposed aspartic acid residues. In terms of assembly, heterodimer of p66 RT and p51 RT (RT p66/p51). Heterodimerization of RT is essential for DNA polymerase activity. The overall folding of the subdomains is similar in p66 RT and p51 RT but the spatial arrangements of the subdomains are dramatically different. Homotetramer; may further associate as a homohexadecamer. Part of the pre-integration complex (PIC) which is composed of viral genome, matrix protein, Vpr and integrase. Interacts with human SMARCB1/INI1 and human PSIP1/LEDGF isoform 1. Interacts with human KPNA3; this interaction might play a role in nuclear import of the pre-integration complex. Interacts with human NUP153; this interaction might play a role in nuclear import of the pre-integration complex. Requires Mg(2+) as cofactor. In terms of processing, specific enzymatic cleavages by the viral protease yield mature proteins. The protease is released by autocatalytic cleavage. The polyprotein is cleaved during and after budding, this process is termed maturation. Proteolytic cleavage of p66 RT removes the RNase H domain to yield the p51 RT subunit. Nucleocapsid protein p7 might be further cleaved after virus entry.

It is found in the host cell membrane. The protein resides in the host endosome. Its subcellular location is the host multivesicular body. The protein localises to the virion membrane. It localises to the host nucleus. It is found in the host cytoplasm. The protein resides in the virion. The catalysed reaction is Endopeptidase for which the P1 residue is preferably hydrophobic.. It carries out the reaction Endohydrolysis of RNA in RNA/DNA hybrids. Three different cleavage modes: 1. sequence-specific internal cleavage of RNA. Human immunodeficiency virus type 1 and Moloney murine leukemia virus enzymes prefer to cleave the RNA strand one nucleotide away from the RNA-DNA junction. 2. RNA 5'-end directed cleavage 13-19 nucleotides from the RNA end. 3. DNA 3'-end directed cleavage 15-20 nucleotides away from the primer terminus.. The enzyme catalyses 3'-end directed exonucleolytic cleavage of viral RNA-DNA hybrid.. It catalyses the reaction DNA(n) + a 2'-deoxyribonucleoside 5'-triphosphate = DNA(n+1) + diphosphate. With respect to regulation, protease: The viral protease is inhibited by many synthetic protease inhibitors (PIs), such as amprenavir, atazanavir, indinavir, loprinavir, nelfinavir, ritonavir and saquinavir. Use of protease inhibitors in tritherapy regimens permit more ambitious therapeutic strategies. Reverse transcriptase/ribonuclease H: RT can be inhibited either by nucleoside RT inhibitors (NRTIs) or by non nucleoside RT inhibitors (NNRTIs). NRTIs act as chain terminators, whereas NNRTIs inhibit DNA polymerization by binding a small hydrophobic pocket near the RT active site and inducing an allosteric change in this region. Classical NRTIs are abacavir, adefovir (PMEA), didanosine (ddI), lamivudine (3TC), stavudine (d4T), tenofovir (PMPA), zalcitabine (ddC), and zidovudine (AZT). Classical NNRTIs are atevirdine (BHAP U-87201E), delavirdine, efavirenz (DMP-266), emivirine (I-EBU), and nevirapine (BI-RG-587). The tritherapies used as a basic effective treatment of AIDS associate two NRTIs and one NNRTI. Its function is as follows. Mediates, with Gag polyprotein, the essential events in virion assembly, including binding the plasma membrane, making the protein-protein interactions necessary to create spherical particles, recruiting the viral Env proteins, and packaging the genomic RNA via direct interactions with the RNA packaging sequence (Psi). Gag-Pol polyprotein may regulate its own translation, by the binding genomic RNA in the 5'-UTR. At low concentration, the polyprotein would promote translation, whereas at high concentration, the polyprotein would encapsidate genomic RNA and then shut off translation. In terms of biological role, targets the polyprotein to the plasma membrane via a multipartite membrane-binding signal, that includes its myristoylated N-terminus. Matrix protein is part of the pre-integration complex. Implicated in the release from host cell mediated by Vpu. Binds to RNA. Functionally, forms the conical core that encapsulates the genomic RNA-nucleocapsid complex in the virion. Most core are conical, with only 7% tubular. The core is constituted by capsid protein hexamer subunits. The core is disassembled soon after virion entry. Host restriction factors such as TRIM5-alpha or TRIMCyp bind retroviral capsids and cause premature capsid disassembly, leading to blocks in reverse transcription. Capsid restriction by TRIM5 is one of the factors which restricts HIV-1 to the human species. Host PIN1 apparently facilitates the virion uncoating. On the other hand, interactions with PDZD8 or CYPA stabilize the capsid. Encapsulates and protects viral dimeric unspliced genomic RNA (gRNA). Binds these RNAs through its zinc fingers. Acts as a nucleic acid chaperone which is involved in rearangement of nucleic acid secondary structure during gRNA retrotranscription. Also facilitates template switch leading to recombination. As part of the polyprotein, participates in gRNA dimerization, packaging, tRNA incorporation and virion assembly. Its function is as follows. Aspartyl protease that mediates proteolytic cleavages of Gag and Gag-Pol polyproteins during or shortly after the release of the virion from the plasma membrane. Cleavages take place as an ordered, step-wise cascade to yield mature proteins. This process is called maturation. Displays maximal activity during the budding process just prior to particle release from the cell. Also cleaves Nef and Vif, probably concomitantly with viral structural proteins on maturation of virus particles. Hydrolyzes host EIF4GI and PABP1 in order to shut off the capped cellular mRNA translation. The resulting inhibition of cellular protein synthesis serves to ensure maximal viral gene expression and to evade host immune response. In terms of biological role, multifunctional enzyme that converts the viral RNA genome into dsDNA in the cytoplasm, shortly after virus entry into the cell. This enzyme displays a DNA polymerase activity that can copy either DNA or RNA templates, and a ribonuclease H (RNase H) activity that cleaves the RNA strand of RNA-DNA heteroduplexes in a partially processive 3' to 5' endonucleasic mode. Conversion of viral genomic RNA into dsDNA requires many steps. A tRNA(3)-Lys binds to the primer-binding site (PBS) situated at the 5'-end of the viral RNA. RT uses the 3' end of the tRNA primer to perform a short round of RNA-dependent minus-strand DNA synthesis. The reading proceeds through the U5 region and ends after the repeated (R) region which is present at both ends of viral RNA. The portion of the RNA-DNA heteroduplex is digested by the RNase H, resulting in a ssDNA product attached to the tRNA primer. This ssDNA/tRNA hybridizes with the identical R region situated at the 3' end of viral RNA. This template exchange, known as minus-strand DNA strong stop transfer, can be either intra- or intermolecular. RT uses the 3' end of this newly synthesized short ssDNA to perform the RNA-dependent minus-strand DNA synthesis of the whole template. RNase H digests the RNA template except for two polypurine tracts (PPTs) situated at the 5'-end and near the center of the genome. It is not clear if both polymerase and RNase H activities are simultaneous. RNase H probably can proceed both in a polymerase-dependent (RNA cut into small fragments by the same RT performing DNA synthesis) and a polymerase-independent mode (cleavage of remaining RNA fragments by free RTs). Secondly, RT performs DNA-directed plus-strand DNA synthesis using the PPTs that have not been removed by RNase H as primers. PPTs and tRNA primers are then removed by RNase H. The 3' and 5' ssDNA PBS regions hybridize to form a circular dsDNA intermediate. Strand displacement synthesis by RT to the PBS and PPT ends produces a blunt ended, linear dsDNA copy of the viral genome that includes long terminal repeats (LTRs) at both ends. Functionally, catalyzes viral DNA integration into the host chromosome, by performing a series of DNA cutting and joining reactions. This enzyme activity takes place after virion entry into a cell and reverse transcription of the RNA genome in dsDNA. The first step in the integration process is 3' processing. This step requires a complex comprising the viral genome, matrix protein, Vpr and integrase. This complex is called the pre-integration complex (PIC). The integrase protein removes 2 nucleotides from each 3' end of the viral DNA, leaving recessed CA OH's at the 3' ends. In the second step, the PIC enters cell nucleus. This process is mediated through integrase and Vpr proteins, and allows the virus to infect a non dividing cell. This ability to enter the nucleus is specific of lentiviruses, other retroviruses cannot and rely on cell division to access cell chromosomes. In the third step, termed strand transfer, the integrase protein joins the previously processed 3' ends to the 5' ends of strands of target cellular DNA at the site of integration. The 5'-ends are produced by integrase-catalyzed staggered cuts, 5 bp apart. A Y-shaped, gapped, recombination intermediate results, with the 5'-ends of the viral DNA strands and the 3' ends of target DNA strands remaining unjoined, flanking a gap of 5 bp. The last step is viral DNA integration into host chromosome. This involves host DNA repair synthesis in which the 5 bp gaps between the unjoined strands are filled in and then ligated. Since this process occurs at both cuts flanking the HIV genome, a 5 bp duplication of host DNA is produced at the ends of HIV-1 integration. Alternatively, Integrase may catalyze the excision of viral DNA just after strand transfer, this is termed disintegration. This Human immunodeficiency virus type 2 subtype A (isolate ST) (HIV-2) protein is Gag-Pol polyprotein (gag-pol).